We begin with the raw amino-acid sequence, 81 residues long: Photosystem I iron-sulfur center (81 aa).

4Fe-4S ferredoxin-type domains lie at 2–31 and 39–68; these read SHTVKIYDTCIGCTQCVRACPTDVLEMVPW and IASAPRTEDCVGCKRCESACPTDFLSVRVY. [4Fe-4S] cluster is bound by residues Cys11, Cys14, Cys17, Cys21, Cys48, Cys51, Cys54, and Cys58.

As to quaternary structure, the eukaryotic PSI reaction center is composed of at least 11 subunits. It depends on [4Fe-4S] cluster as a cofactor.

It is found in the plastid. The protein resides in the chloroplast thylakoid membrane. It carries out the reaction reduced [plastocyanin] + hnu + oxidized [2Fe-2S]-[ferredoxin] = oxidized [plastocyanin] + reduced [2Fe-2S]-[ferredoxin]. Its function is as follows. Apoprotein for the two 4Fe-4S centers FA and FB of photosystem I (PSI); essential for photochemical activity. FB is the terminal electron acceptor of PSI, donating electrons to ferredoxin. The C-terminus interacts with PsaA/B/D and helps assemble the protein into the PSI complex. Required for binding of PsaD and PsaE to PSI. PSI is a plastocyanin/cytochrome c6-ferredoxin oxidoreductase, converting photonic excitation into a charge separation, which transfers an electron from the donor P700 chlorophyll pair to the spectroscopically characterized acceptors A0, A1, FX, FA and FB in turn. This Chlorella vulgaris (Green alga) protein is Photosystem I iron-sulfur center.